A 168-amino-acid polypeptide reads, in one-letter code: Photosystem I assembly protein Ycf3 (168 aa).

3 TPR repeats span residues 35–68, 72–105, and 120–153; these read AFTY…EIDP, SYIL…NPFL, and GEQA…TPGN.

This sequence belongs to the Ycf3 family.

It localises to the plastid. It is found in the chloroplast thylakoid membrane. Its function is as follows. Essential for the assembly of the photosystem I (PSI) complex. May act as a chaperone-like factor to guide the assembly of the PSI subunits. The sequence is that of Photosystem I assembly protein Ycf3 from Phalaenopsis aphrodite subsp. formosana (Moth orchid).